A 1412-amino-acid chain; its full sequence is DNA-directed RNA polymerase subunit beta' (1412 aa).

Zn(2+) contacts are provided by C71, C73, C86, and C89. Mg(2+)-binding residues include D461, D463, and D465. Zn(2+)-binding residues include C815, C889, C896, and C899.

It belongs to the RNA polymerase beta' chain family. The RNAP catalytic core consists of 2 alpha, 1 beta, 1 beta' and 1 omega subunit. When a sigma factor is associated with the core the holoenzyme is formed, which can initiate transcription. Mg(2+) serves as cofactor. Requires Zn(2+) as cofactor.

It catalyses the reaction RNA(n) + a ribonucleoside 5'-triphosphate = RNA(n+1) + diphosphate. Its function is as follows. DNA-dependent RNA polymerase catalyzes the transcription of DNA into RNA using the four ribonucleoside triphosphates as substrates. The sequence is that of DNA-directed RNA polymerase subunit beta' from Actinobacillus pleuropneumoniae serotype 5b (strain L20).